The sequence spans 421 residues: D-amino acid dehydrogenase (421 aa).

3–17 (VTILGAGVIGVTSAY) contacts FAD.

It belongs to the DadA oxidoreductase family. Requires FAD as cofactor.

The enzyme catalyses a D-alpha-amino acid + A + H2O = a 2-oxocarboxylate + AH2 + NH4(+). It participates in amino-acid degradation; D-alanine degradation; NH(3) and pyruvate from D-alanine: step 1/1. Oxidative deamination of D-amino acids. The sequence is that of D-amino acid dehydrogenase from Allorhizobium ampelinum (strain ATCC BAA-846 / DSM 112012 / S4) (Agrobacterium vitis (strain S4)).